Reading from the N-terminus, the 303-residue chain is UDP-N-acetylenolpyruvoylglucosamine reductase (303 aa).

One can recognise an FAD-binding PCMH-type domain in the interval 32-212 (IGGKADLFLN…EQETKEYLAK (181 aa)). The active site involves R176. The active-site Proton donor is the S226. E296 is a catalytic residue.

The protein belongs to the MurB family. FAD serves as cofactor.

Its subcellular location is the cytoplasm. It catalyses the reaction UDP-N-acetyl-alpha-D-muramate + NADP(+) = UDP-N-acetyl-3-O-(1-carboxyvinyl)-alpha-D-glucosamine + NADPH + H(+). Its pathway is cell wall biogenesis; peptidoglycan biosynthesis. Cell wall formation. The polypeptide is UDP-N-acetylenolpyruvoylglucosamine reductase (Desulforamulus reducens (strain ATCC BAA-1160 / DSM 100696 / MI-1) (Desulfotomaculum reducens)).